A 1167-amino-acid chain; its full sequence is Tight junction protein 2 (1167 aa).

One can recognise a PDZ 1 domain in the interval 10 to 97 (TVTLQKDSKR…IAAIVVKRPR (88 aa)). A phosphoserine mark is found at S107, S127, S130, S140, S145, S147, S173, S194, S205, and S239. The tract at residues 129 to 195 (RSGYSERSRH…SRERSRGRSL (67 aa)) is disordered. Residues 225-286 (SYHEAYEPDY…KGQHDPDRPI (62 aa)) form a disordered region. A compositionally biased stretch (basic and acidic residues) spans 242-262 (YDRRAHPETRYERSRSREHLR). The region spanning 287–365 (GVLLTKSKAN…KLQLVVLRDS (79 aa)) is the PDZ 2 domain. Phosphoserine occurs at positions 305, 378, 380, 386, 395, 404, 410, and 411. Positions 381–485 (EVEDISEIES…LRPSPEDEAI (105 aa)) are disordered. Basic and acidic residues predominate over residues 395-426 (SPEERRQQYSDQDYHSSTEKLKERPSSREETS). T435 carries the phosphothreonine modification. S479 carries the phosphoserine modification. Positions 489–570 (NTKMVRFKKG…GETVTILAQS (82 aa)) constitute a PDZ 3 domain. Y554 carries the post-translational modification Phosphotyrosine. In terms of domain architecture, SH3 spans 584–649 (GDSFFIRSHF…PNKSRAEQMA (66 aa)). The Guanylate kinase-like domain maps to 660–858 (GDRADFWRMR…WFGSLKDSIQ (199 aa)). S684 and S884 each carry phosphoserine. T887 carries the post-translational modification Phosphothreonine. A phosphoserine mark is found at S895 and S902. Disordered regions lie at residues 904-1055 (FEDT…PRSV) and 1095-1167 (YAVP…DTEL). T907 and T915 each carry phosphothreonine. Residues 938–949 (VQHEENIRKSSP) show a composition bias toward basic and acidic residues. Residues S948, S960, S968, S988, and S1044 each carry the phosphoserine modification. A compositionally biased stretch (basic and acidic residues) spans 976 to 990 (EPPKARSQNREDSFD). Acidic residues predominate over residues 1037 to 1049 (ESEEVGESTEEQE). Y1095 is modified (phosphotyrosine). 2 positions are modified to phosphoserine: S1124 and S1136. Residues 1165-1167 (TEL) form an interaction with SCRIB region.

This sequence belongs to the MAGUK family. As to quaternary structure, homodimer. Interacts (via PDZ2 domain) with TJP1/ZO1 (via PDZ2 domain). Interacts with UBN1. Interacts with SCRIB. Interacts with OCLN. Interacts with SAFB in the nucleus. Interacts with USP53 (via the C-terminal region). Interacts with claudins, including CLDN1, CLDN2, CLDN3, CLDN5 and CLDN7. Interacts with CLDN18. Interacts (via N-terminus) with CTNNA1.

The protein localises to the cell junction. It localises to the adherens junction. It is found in the cell membrane. Its subcellular location is the nucleus. The protein resides in the tight junction. In terms of biological role, plays a role in tight junctions and adherens junctions. Acts as a positive regulator of RANKL-induced osteoclast differentiation, potentially via mediating downstream transcriptional activity. In Mus musculus (Mouse), this protein is Tight junction protein 2.